Reading from the N-terminus, the 128-residue chain is Head peptide (128 aa).

Positions 1-22 are cleaved as a signal peptide; the sequence is MWKFASIVVLVVCLAWAVYCED. At glutamine 23 the chain carries Pyrrolidone carboxylic acid. Residue proline 26 is modified to Hydroxyproline; partial. The segment at 27–128 is disordered; sequence SLKTRFGRSA…GRANKKRAAN (102 aa). The residue at position 32 (phenylalanine 32) is a Phenylalanine amide. A propeptide spanning residues 35–55 is cleaved from the precursor; the sequence is SADEPESDNYVSNDIMEKRSA. Position 56 is a pyrrolidone carboxylic acid (glutamine 56). Proline 59 is subject to Hydroxyproline; partial. The residue at position 65 (phenylalanine 65) is a Phenylalanine amide. A compositionally biased stretch (basic and acidic residues) spans 66-78; it reads GRSEGAEVMEKRS. The propeptide occupies 68 to 79; that stretch reads SEGAEVMEKRSA. At glutamine 80 the chain carries Pyrrolidone carboxylic acid. A Hydroxyproline; partial modification is found at proline 83. A Phenylalanine amide modification is found at phenylalanine 89. A propeptide spanning residues 92–128 is cleaved from the precursor; the sequence is SVANPESDGYMRKRSAESEPFVTRIRHGRANKKRAAN. Basic residues predominate over residues 115–128; the sequence is RIRHGRANKKRAAN.

Belongs to the NPY family. As to expression, expressed in the brain, terminal ganglion, and midgut of adults: numerous neurosecretory cells and midgut endocrine cells. Expression is dynamic depending on reproductive cycle.

It is found in the secreted. Its function is as follows. Has a role in inhibiting host-seeking behavior during a reproductive cycle. The polypeptide is Head peptide (Aedes aegypti (Yellowfever mosquito)).